The primary structure comprises 65 residues: Keratin-associated protein 23-1 (65 aa).

As to quaternary structure, interacts with hair keratins.

Its function is as follows. In the hair cortex, hair keratin intermediate filaments are embedded in an interfilamentous matrix, consisting of hair keratin-associated proteins (KRTAP), which are essential for the formation of a rigid and resistant hair shaft through their extensive disulfide bond cross-linking with abundant cysteine residues of hair keratins. The matrix proteins include the high-sulfur and high-glycine-tyrosine keratins. The polypeptide is Keratin-associated protein 23-1 (KRTAP23-1) (Homo sapiens (Human)).